Reading from the N-terminus, the 930-residue chain is Endoplasmic reticulum aminopeptidase 1 (930 aa).

The Cytoplasmic segment spans residues 1–2; that stretch reads MP. The chain crosses the membrane as a helical; Signal-anchor for type II membrane protein span at residues 3–23; the sequence is SLLPLVLTFLSVSSPSWCQNS. At 24–930 the chain is on the lumenal side; it reads DIESLKASNG…WLQKEKPELL (907 aa). Asn59 and Asn143 each carry an N-linked (GlcNAc...) asparagine glycan. Residues Glu172 and 306–310 each bind substrate; that span reads GAMEN. His342 contacts Zn(2+). Glu343 is an active-site residue. Zn(2+) is bound by residues His346 and Glu365. A disulfide bridge links Cys393 with Cys432. Residues Asn403 and Asn655 are each glycosylated (N-linked (GlcNAc...) asparagine). A disulfide bridge links Cys725 with Cys732. N-linked (GlcNAc...) asparagine glycosylation is found at Asn749 and Asn890.

The protein belongs to the peptidase M1 family. Monomer. May also exist as a heterodimer; with ERAP2. Interacts with RBMX. It depends on Zn(2+) as a cofactor. Post-translationally, N-glycosylated.

It localises to the endoplasmic reticulum membrane. Functionally, aminopeptidase that plays a central role in peptide trimming, a step required for the generation of most HLA class I-binding peptides. Peptide trimming is essential to customize longer precursor peptides to fit them to the correct length required for presentation on MHC class I molecules. Strongly prefers substrates 9-16 residues long. Rapidly degrades 13-mer to a 9-mer and then stops. Preferentially hydrolyzes the residue Leu and peptides with a hydrophobic C-terminus, while it has weak activity toward peptides with charged C-terminus. May play a role in the inactivation of peptide hormones. May be involved in the regulation of blood pressure through the inactivation of angiotensin II and/or the generation of bradykinin in the kidney. This chain is Endoplasmic reticulum aminopeptidase 1 (Erap1), found in Mus musculus (Mouse).